We begin with the raw amino-acid sequence, 227 residues long: Cytochrome c oxidase subunit 2 (227 aa).

Over 1–14 (MAYPLQLGLQDATS) the chain is Mitochondrial intermembrane. A helical transmembrane segment spans residues 15-45 (PIMEELMNFHDHTLMIVFLISSLVLYVISSM). Residues 46 to 59 (LTTKLTHTSTMDAQ) are Mitochondrial matrix-facing. The helical transmembrane segment at 60-87 (EVETIWTILPAVILIMIALPSLRILYMM) threads the bilayer. The Mitochondrial intermembrane segment spans residues 88–227 (DEINNPVLTV…NFETWSVSMI (140 aa)). Cu cation is bound by residues histidine 161, cysteine 196, glutamate 198, cysteine 200, histidine 204, and methionine 207. Glutamate 198 contributes to the Mg(2+) binding site.

This sequence belongs to the cytochrome c oxidase subunit 2 family. As to quaternary structure, component of the cytochrome c oxidase (complex IV, CIV), a multisubunit enzyme composed of 14 subunits. The complex is composed of a catalytic core of 3 subunits MT-CO1, MT-CO2 and MT-CO3, encoded in the mitochondrial DNA, and 11 supernumerary subunits COX4I, COX5A, COX5B, COX6A, COX6B, COX6C, COX7A, COX7B, COX7C, COX8 and NDUFA4, which are encoded in the nuclear genome. The complex exists as a monomer or a dimer and forms supercomplexes (SCs) in the inner mitochondrial membrane with NADH-ubiquinone oxidoreductase (complex I, CI) and ubiquinol-cytochrome c oxidoreductase (cytochrome b-c1 complex, complex III, CIII), resulting in different assemblies (supercomplex SCI(1)III(2)IV(1) and megacomplex MCI(2)III(2)IV(2)). Found in a complex with TMEM177, COA6, COX18, COX20, SCO1 and SCO2. Interacts with TMEM177 in a COX20-dependent manner. Interacts with COX20. Interacts with COX16. It depends on Cu cation as a cofactor.

Its subcellular location is the mitochondrion inner membrane. The enzyme catalyses 4 Fe(II)-[cytochrome c] + O2 + 8 H(+)(in) = 4 Fe(III)-[cytochrome c] + 2 H2O + 4 H(+)(out). Functionally, component of the cytochrome c oxidase, the last enzyme in the mitochondrial electron transport chain which drives oxidative phosphorylation. The respiratory chain contains 3 multisubunit complexes succinate dehydrogenase (complex II, CII), ubiquinol-cytochrome c oxidoreductase (cytochrome b-c1 complex, complex III, CIII) and cytochrome c oxidase (complex IV, CIV), that cooperate to transfer electrons derived from NADH and succinate to molecular oxygen, creating an electrochemical gradient over the inner membrane that drives transmembrane transport and the ATP synthase. Cytochrome c oxidase is the component of the respiratory chain that catalyzes the reduction of oxygen to water. Electrons originating from reduced cytochrome c in the intermembrane space (IMS) are transferred via the dinuclear copper A center (CU(A)) of subunit 2 and heme A of subunit 1 to the active site in subunit 1, a binuclear center (BNC) formed by heme A3 and copper B (CU(B)). The BNC reduces molecular oxygen to 2 water molecules using 4 electrons from cytochrome c in the IMS and 4 protons from the mitochondrial matrix. This Malacothrix typica (Long-eared mouse) protein is Cytochrome c oxidase subunit 2 (MT-CO2).